The primary structure comprises 22 residues: Phospholipase A2 (22 aa).

Belongs to the phospholipase A2 family. Group II subfamily. Requires Ca(2+) as cofactor. Seven disulfide bonds are present. In terms of tissue distribution, expressed by the venom gland.

It is found in the secreted. It carries out the reaction a 1,2-diacyl-sn-glycero-3-phosphocholine + H2O = a 1-acyl-sn-glycero-3-phosphocholine + a fatty acid + H(+). Snake venom phospholipase A2 (PLA2) that inhibits neuromuscular transmission by blocking acetylcholine release from the nerve termini. PLA2 catalyzes the calcium-dependent hydrolysis of the 2-acyl groups in 3-sn-phosphoglycerides. This chain is Phospholipase A2, found in Daboia siamensis (Eastern Russel's viper).